The chain runs to 304 residues: Choline-phosphate cytidylyltransferase 2 (304 aa).

CTP is bound by residues 28-36 (IFDLFHFGH) and lysine 66. The substrate site is built by lysine 66 and tryptophan 95. CTP contacts are provided by residues 112-113 (HD), tyrosine 117, and 142-146 (RTEGI). Residues 266–292 (QNGLTISKDNDDEQMSDDNEFAEEDCV) form a disordered region. The segment covering 275-291 (NDDEQMSDDNEFAEEDC) has biased composition (acidic residues).

This sequence belongs to the cytidylyltransferase family.

It catalyses the reaction phosphocholine + CTP + H(+) = CDP-choline + diphosphate. It participates in phospholipid metabolism; phosphatidylcholine biosynthesis; phosphatidylcholine from phosphocholine: step 1/2. Functionally, plays an important role in the biosynthesis of the phospholipid phosphatidylcholine. Catalyzes the formation of CDP-choline. The polypeptide is Choline-phosphate cytidylyltransferase 2 (Arabidopsis thaliana (Mouse-ear cress)).